Consider the following 192-residue polypeptide: Holliday junction branch migration complex subunit RuvA (192 aa).

Residues 1–64 (MLGRLTGLLA…EDAQVLFGFL (64 aa)) are domain I. Residues 65–139 (TAPERETFRM…GKLGADLGPA (75 aa)) are domain II. The segment at 139 to 143 (AIGGK) is flexible linker. The interval 144–192 (PASDAQADILQALIALGYSEREAQAAVKALPAEVGVSDGIKLALKALAR) is domain III.

Belongs to the RuvA family. Homotetramer. Forms an RuvA(8)-RuvB(12)-Holliday junction (HJ) complex. HJ DNA is sandwiched between 2 RuvA tetramers; dsDNA enters through RuvA and exits via RuvB. An RuvB hexamer assembles on each DNA strand where it exits the tetramer. Each RuvB hexamer is contacted by two RuvA subunits (via domain III) on 2 adjacent RuvB subunits; this complex drives branch migration. In the full resolvosome a probable DNA-RuvA(4)-RuvB(12)-RuvC(2) complex forms which resolves the HJ.

The protein resides in the cytoplasm. In terms of biological role, the RuvA-RuvB-RuvC complex processes Holliday junction (HJ) DNA during genetic recombination and DNA repair, while the RuvA-RuvB complex plays an important role in the rescue of blocked DNA replication forks via replication fork reversal (RFR). RuvA specifically binds to HJ cruciform DNA, conferring on it an open structure. The RuvB hexamer acts as an ATP-dependent pump, pulling dsDNA into and through the RuvAB complex. HJ branch migration allows RuvC to scan DNA until it finds its consensus sequence, where it cleaves and resolves the cruciform DNA. This Methylibium petroleiphilum (strain ATCC BAA-1232 / LMG 22953 / PM1) protein is Holliday junction branch migration complex subunit RuvA.